We begin with the raw amino-acid sequence, 548 residues long: Adenine deaminase (548 aa).

Belongs to the metallo-dependent hydrolases superfamily. Adenine deaminase family. Mn(2+) serves as cofactor.

It carries out the reaction adenine + H2O + H(+) = hypoxanthine + NH4(+). This chain is Adenine deaminase, found in Borreliella burgdorferi (strain ATCC 35210 / DSM 4680 / CIP 102532 / B31) (Borrelia burgdorferi).